Consider the following 189-residue polypeptide: MATYSTNEFKGGLKIMLDGDPFTIVENEFVKPGKGQAFNRVKLRNLKTNRVVEKTFKSGESVEAADVMETELQYLYNDGEFWYFMDPTSFEQKAAPSSAVGDAANWIKEQDTCTVILWNDTPLQVEAPNFVDLKVIETDPGVRGDTSSGGTKPAKLETGATVRVPLFIEEGEVLRVDTRKAEYVSRAKD.

N6-(3,6-diaminohexanoyl)-5-hydroxylysine is present on Lys34.

It belongs to the elongation factor P family. May be beta-lysylated on the epsilon-amino group of Lys-34 by the combined action of EpmA and EpmB, and then hydroxylated on the C5 position of the same residue by EpmC (if this protein is present). Lysylation is critical for the stimulatory effect of EF-P on peptide-bond formation. The lysylation moiety may extend toward the peptidyltransferase center and stabilize the terminal 3-CCA end of the tRNA. Hydroxylation of the C5 position on Lys-34 may allow additional potential stabilizing hydrogen-bond interactions with the P-tRNA.

The protein resides in the cytoplasm. It functions in the pathway protein biosynthesis; polypeptide chain elongation. In terms of biological role, involved in peptide bond synthesis. Alleviates ribosome stalling that occurs when 3 or more consecutive Pro residues or the sequence PPG is present in a protein, possibly by augmenting the peptidyl transferase activity of the ribosome. Modification of Lys-34 is required for alleviation. This chain is Elongation factor P, found in Halorhodospira halophila (strain DSM 244 / SL1) (Ectothiorhodospira halophila (strain DSM 244 / SL1)).